Consider the following 363-residue polypeptide: Copper-containing nitrite reductase (363 aa).

The signal sequence occupies residues 1–24 (MSVFRSVLGACVLLGSCASSLALA). 2 consecutive Plastocyanin-like domains span residues 25–193 (GGAE…YDRV) and 194–363 (YTIG…EPKQ). Cu cation-binding residues include His113, His118, His153, Cys154, His163, Met168, and His324.

The protein belongs to the multicopper oxidase family. In terms of assembly, homotrimer. The cofactor is Cu(2+). Cu(+) serves as cofactor. Requires FAD as cofactor.

The protein resides in the periplasm. The catalysed reaction is nitric oxide + Fe(III)-[cytochrome c] + H2O = Fe(II)-[cytochrome c] + nitrite + 2 H(+). It participates in nitrogen metabolism; nitrate reduction (denitrification); dinitrogen from nitrate: step 2/4. In Pseudomonas chlororaphis (Pseudomonas aureofaciens), this protein is Copper-containing nitrite reductase (nirK).